A 113-amino-acid chain; its full sequence is Iron-sulfur cluster insertion protein ErpA (113 aa).

Iron-sulfur cluster-binding residues include Cys41, Cys105, and Cys107.

It belongs to the HesB/IscA family. Homodimer. The cofactor is iron-sulfur cluster.

Required for insertion of 4Fe-4S clusters for at least IspG. The polypeptide is Iron-sulfur cluster insertion protein ErpA (Photobacterium profundum (strain SS9)).